Here is a 289-residue protein sequence, read N- to C-terminus: ATP phosphoribosyltransferase (289 aa).

It belongs to the ATP phosphoribosyltransferase family. Long subfamily. Mg(2+) serves as cofactor.

It localises to the cytoplasm. The enzyme catalyses 1-(5-phospho-beta-D-ribosyl)-ATP + diphosphate = 5-phospho-alpha-D-ribose 1-diphosphate + ATP. It functions in the pathway amino-acid biosynthesis; L-histidine biosynthesis; L-histidine from 5-phospho-alpha-D-ribose 1-diphosphate: step 1/9. Its activity is regulated as follows. Feedback inhibited by histidine. Functionally, catalyzes the condensation of ATP and 5-phosphoribose 1-diphosphate to form N'-(5'-phosphoribosyl)-ATP (PR-ATP). Has a crucial role in the pathway because the rate of histidine biosynthesis seems to be controlled primarily by regulation of HisG enzymatic activity. In Desulforudis audaxviator (strain MP104C), this protein is ATP phosphoribosyltransferase.